The following is a 300-amino-acid chain: tRNA dimethylallyltransferase 1 (300 aa).

10 to 17 (GPTGVGKT) serves as a coordination point for ATP. Residue 12-17 (TGVGKT) participates in substrate binding. The tract at residues 35–38 (DSRQ) is interaction with substrate tRNA.

It belongs to the IPP transferase family. Monomer. Mg(2+) serves as cofactor.

The catalysed reaction is adenosine(37) in tRNA + dimethylallyl diphosphate = N(6)-dimethylallyladenosine(37) in tRNA + diphosphate. Functionally, catalyzes the transfer of a dimethylallyl group onto the adenine at position 37 in tRNAs that read codons beginning with uridine, leading to the formation of N6-(dimethylallyl)adenosine (i(6)A). The sequence is that of tRNA dimethylallyltransferase 1 from Phocaeicola vulgatus (strain ATCC 8482 / DSM 1447 / JCM 5826 / CCUG 4940 / NBRC 14291 / NCTC 11154) (Bacteroides vulgatus).